The following is a 101-amino-acid chain: Large ribosomal subunit protein uL24 (101 aa).

It belongs to the universal ribosomal protein uL24 family. Part of the 50S ribosomal subunit.

One of two assembly initiator proteins, it binds directly to the 5'-end of the 23S rRNA, where it nucleates assembly of the 50S subunit. Its function is as follows. One of the proteins that surrounds the polypeptide exit tunnel on the outside of the subunit. The chain is Large ribosomal subunit protein uL24 from Borrelia turicatae (strain 91E135).